The sequence spans 226 residues: 1-hydroxy-2-glutathionyl-2-methyl-3-butene dehydrogenase (226 aa).

Belongs to the short-chain dehydrogenases/reductases (SDR) family.

The enzyme catalyses 2-glutathionyl-2-methylbut-3-en-1-ol + 2 NAD(+) + H2O = 2-glutathionyl-2-methylbut-3-enoate + 2 NADH + 3 H(+). It catalyses the reaction 2-glutathionyl-2-methylbut-3-en-1-ol + NAD(+) = 2-glutathionyl-2-methylbut-3-enal + NADH + H(+). It carries out the reaction 2-glutathionyl-2-methylbut-3-enal + NAD(+) + H2O = 2-glutathionyl-2-methylbut-3-enoate + NADH + 2 H(+). In terms of biological role, involved in isoprene degradation. Catalyzes the two-step NAD(+)-dependent oxidation of 2-glutathionyl-2-methylbut-3-en-1-ol (HGMB) to 2-glutathionyl-2-methylbut-3-enoate (GMBA). The chain is 1-hydroxy-2-glutathionyl-2-methyl-3-butene dehydrogenase from Rhodococcus sp. (strain AD45).